The chain runs to 454 residues: Aspartate aminotransferase P2, mitochondrial (454 aa).

The N-terminal 49 residues, S1 to V49, are a transit peptide targeting the mitochondrion. Residues G86, W182, and N235 each coordinate L-aspartate. At K299 the chain carries N6-(pyridoxal phosphate)lysine. An L-aspartate-binding site is contributed by R428.

It belongs to the class-I pyridoxal-phosphate-dependent aminotransferase family. In terms of assembly, homodimer. The cofactor is pyridoxal 5'-phosphate.

The protein localises to the mitochondrion matrix. The enzyme catalyses L-aspartate + 2-oxoglutarate = oxaloacetate + L-glutamate. Its function is as follows. Important for the metabolism of amino acids and Krebs-cycle related organic acids. In plants, it is involved in nitrogen metabolism and in aspects of carbon and energy metabolism. In Lupinus angustifolius (Narrow-leaved blue lupine), this protein is Aspartate aminotransferase P2, mitochondrial.